The sequence spans 218 residues: Octanoyltransferase (218 aa).

Residues 34 to 209 enclose the BPL/LPL catalytic domain; sequence ETSRDELWIV…TFSQELGYQH (176 aa). Substrate contacts are provided by residues 73-80, 140-142, and 153-155; these read RGGQVTYH, SLG, and GLA. Cysteine 171 acts as the Acyl-thioester intermediate in catalysis.

It belongs to the LipB family.

Its subcellular location is the cytoplasm. It carries out the reaction octanoyl-[ACP] + L-lysyl-[protein] = N(6)-octanoyl-L-lysyl-[protein] + holo-[ACP] + H(+). Its pathway is protein modification; protein lipoylation via endogenous pathway; protein N(6)-(lipoyl)lysine from octanoyl-[acyl-carrier-protein]: step 1/2. In terms of biological role, catalyzes the transfer of endogenously produced octanoic acid from octanoyl-acyl-carrier-protein onto the lipoyl domains of lipoate-dependent enzymes. Lipoyl-ACP can also act as a substrate although octanoyl-ACP is likely to be the physiological substrate. The chain is Octanoyltransferase from Shewanella loihica (strain ATCC BAA-1088 / PV-4).